A 376-amino-acid polypeptide reads, in one-letter code: Beta-centractin (376 aa).

At M1 the chain carries N-acetylmethionine. At Y4 the chain carries 3'-nitrotyrosine.

The protein belongs to the actin family. ARP1 subfamily.

The protein resides in the cytoplasm. The protein localises to the cytoskeleton. It is found in the microtubule organizing center. Its subcellular location is the centrosome. Its function is as follows. Component of a multi-subunit complex involved in microtubule based vesicle motility. It is associated with the centrosome. The polypeptide is Beta-centractin (ACTR1B) (Bos taurus (Bovine)).